We begin with the raw amino-acid sequence, 296 residues long: Protease HtpX homolog (296 aa).

The next 2 helical transmembrane spans lie at 14–34 and 39–59; these read VVLL…VGYL and YQFG…SMIF. His-143 lines the Zn(2+) pocket. The active site involves Glu-144. His-147 contributes to the Zn(2+) binding site. The next 2 helical transmembrane spans lie at 158–178 and 195–215; these read IAVA…RMLF and ILVL…ASLV. A Zn(2+)-binding site is contributed by Glu-224.

This sequence belongs to the peptidase M48B family. The cofactor is Zn(2+).

It localises to the cell membrane. This chain is Protease HtpX homolog, found in Streptococcus agalactiae serotype III (strain NEM316).